We begin with the raw amino-acid sequence, 356 residues long: Nicotinate-nucleotide--dimethylbenzimidazole phosphoribosyltransferase (356 aa).

The active-site Proton acceptor is Glu317.

The protein belongs to the CobT family. Homodimer.

The enzyme catalyses 5,6-dimethylbenzimidazole + nicotinate beta-D-ribonucleotide = alpha-ribazole 5'-phosphate + nicotinate + H(+). The protein operates within nucleoside biosynthesis; alpha-ribazole biosynthesis; alpha-ribazole from 5,6-dimethylbenzimidazole: step 1/2. In terms of biological role, catalyzes the synthesis of alpha-ribazole-5'-phosphate from nicotinate mononucleotide (NAMN) and 5,6-dimethylbenzimidazole (DMB). This chain is Nicotinate-nucleotide--dimethylbenzimidazole phosphoribosyltransferase, found in Salmonella paratyphi A (strain ATCC 9150 / SARB42).